Consider the following 288-residue polypeptide: Ribosomal RNA small subunit methyltransferase A (288 aa).

The S-adenosyl-L-methionine site is built by asparagine 28, leucine 30, glycine 55, glutamate 76, aspartate 101, and asparagine 130.

It belongs to the class I-like SAM-binding methyltransferase superfamily. rRNA adenine N(6)-methyltransferase family. RsmA subfamily.

The protein localises to the cytoplasm. The enzyme catalyses adenosine(1518)/adenosine(1519) in 16S rRNA + 4 S-adenosyl-L-methionine = N(6)-dimethyladenosine(1518)/N(6)-dimethyladenosine(1519) in 16S rRNA + 4 S-adenosyl-L-homocysteine + 4 H(+). Specifically dimethylates two adjacent adenosines (A1518 and A1519) in the loop of a conserved hairpin near the 3'-end of 16S rRNA in the 30S particle. May play a critical role in biogenesis of 30S subunits. The chain is Ribosomal RNA small subunit methyltransferase A from Moorella thermoacetica (strain ATCC 39073 / JCM 9320).